Consider the following 1373-residue polypeptide: Actin cytoskeleton-regulatory complex protein PAN1 (1373 aa).

Positions 116 to 205 (DQKKFEHLFR…EKWANEVKSF (90 aa)) constitute an EH 1 domain. The EF-hand 1 domain maps to 149-184 (LTPVTLAEIWSLSDTNKSGSLLFPEFALSLHLCSMA). Disordered regions lie at residues 271–362 (GGGL…QQQS) and 385–409 (AQRT…QPTG). 2 stretches are compositionally biased toward low complexity: residues 290–309 (TTSF…PLAS) and 341–362 (PQQL…QQQS). Polar residues predominate over residues 389–408 (GPLQSQSTGFQPAPLQSQPT). The 90-residue stretch at 465–554 (EKSIYDGIFQ…PELIPPSNKY (90 aa)) folds into the EH 2 domain. One can recognise an EF-hand 2 domain in the interval 498–533 (LSRPDLESIWTLADTSDRGKLNKDEFSVAMHLVYRR). Disordered regions lie at residues 562 to 622 (MKNS…SSSD), 739 to 758 (SWNP…NGEV), 876 to 914 (QNSS…RTPE), 931 to 1089 (RLAK…TAED), 1103 to 1335 (EAVP…APPV), and 1349 to 1373 (GKSL…TVLS). Positions 571 to 580 (NNKSYSGGKQ) are enriched in polar residues. Positions 581 to 590 (TKSDGTRFKN) are enriched in basic and acidic residues. The span at 739–752 (SWNPDSNESEIQGT) shows a compositional bias: polar residues. Composition is skewed to low complexity over residues 878-909 (SSSL…ASSS) and 965-977 (PAVV…SPPV). Residues 1007-1066 (DDEEYAAILKQKQQLEAKEKERKLAKQKQKQARLDKIKKEMEEIKRRQAEAEAEEDSDEE) are a coiled coil. 2 stretches are compositionally biased toward basic and acidic residues: residues 1019-1030 (QQLEAKEKERKL) and 1038-1056 (ARLD…RQAE). Residues 1057–1067 (AEAEEDSDEEP) show a composition bias toward acidic residues. Polar residues-rich tracts occupy residues 1070–1079 (VPTYTVSNSA) and 1118–1134 (NPFS…STNP). Residues 1139-1149 (TTKESTIDPKK) are compositionally biased toward basic and acidic residues. Residues 1154–1166 (RASQRGLSKNDGW) show a composition bias toward polar residues. Residues 1167-1177 (SDSDDNESEDD) show a composition bias toward acidic residues. A compositionally biased stretch (pro residues) spans 1250–1326 (PPIPTEVPPI…PPPPGPPPPV (77 aa)). A WH2 domain is found at 1338–1355 (DIGALLGQIQGGKSLKKV). A compositionally biased stretch (polar residues) spans 1357–1373 (ASQQKISSNDLAGTVLS).

Belongs to the PAN1 family. Component of the PAN1 actin cytoskeleton-regulatory complex.

Its subcellular location is the cell membrane. It localises to the endosome membrane. The protein resides in the cytoplasm. The protein localises to the cytoskeleton. It is found in the actin patch. Functionally, component of the PAN1 actin cytoskeleton-regulatory complex required for the internalization of endosomes during actin-coupled endocytosis. The complex links the site of endocytosis to the cell membrane-associated actin cytoskeleton. Mediates uptake of external molecules and vacuolar degradation of plasma membrane proteins. Plays a role in the proper organization of the cell membrane-associated actin cytoskeleton and promotes its destabilization. This chain is Actin cytoskeleton-regulatory complex protein PAN1 (PAN1), found in Scheffersomyces stipitis (strain ATCC 58785 / CBS 6054 / NBRC 10063 / NRRL Y-11545) (Yeast).